The sequence spans 252 residues: 2-succinyl-6-hydroxy-2,4-cyclohexadiene-1-carboxylate synthase (252 aa).

It belongs to the AB hydrolase superfamily. MenH family. As to quaternary structure, monomer.

It carries out the reaction 5-enolpyruvoyl-6-hydroxy-2-succinyl-cyclohex-3-ene-1-carboxylate = (1R,6R)-6-hydroxy-2-succinyl-cyclohexa-2,4-diene-1-carboxylate + pyruvate. It functions in the pathway quinol/quinone metabolism; 1,4-dihydroxy-2-naphthoate biosynthesis; 1,4-dihydroxy-2-naphthoate from chorismate: step 3/7. Its pathway is quinol/quinone metabolism; menaquinone biosynthesis. Its function is as follows. Catalyzes a proton abstraction reaction that results in 2,5-elimination of pyruvate from 2-succinyl-5-enolpyruvyl-6-hydroxy-3-cyclohexene-1-carboxylate (SEPHCHC) and the formation of 2-succinyl-6-hydroxy-2,4-cyclohexadiene-1-carboxylate (SHCHC). In Shigella sonnei (strain Ss046), this protein is 2-succinyl-6-hydroxy-2,4-cyclohexadiene-1-carboxylate synthase.